Here is a 231-residue protein sequence, read N- to C-terminus: Small ribosomal subunit protein uS3 (231 aa).

The KH type-2 domain occupies 17–86 (VEKYLTKELK…SPQIEVQQVQ (70 aa)).

This sequence belongs to the universal ribosomal protein uS3 family. As to quaternary structure, part of the 30S ribosomal subunit.

Its function is as follows. Binds the lower part of the 30S subunit head. The protein is Small ribosomal subunit protein uS3 of Methanoregula boonei (strain DSM 21154 / JCM 14090 / 6A8).